Consider the following 186-residue polypeptide: Probable RNA 2'-phosphotransferase (186 aa).

The protein belongs to the KptA/TPT1 family.

In terms of biological role, removes the 2'-phosphate from RNA via an intermediate in which the phosphate is ADP-ribosylated by NAD followed by a presumed transesterification to release the RNA and generate ADP-ribose 1''-2''-cyclic phosphate (APPR&gt;P). May function as an ADP-ribosylase. This Clostridium perfringens (strain SM101 / Type A) protein is Probable RNA 2'-phosphotransferase.